The sequence spans 210 residues: Fibrillarin-like rRNA/tRNA 2'-O-methyltransferase (210 aa).

Residues 72 to 73 (TT), 88 to 89 (EF), 113 to 114 (DA), and 134 to 137 (DVAT) each bind S-adenosyl-L-methionine.

The protein belongs to the methyltransferase superfamily. Fibrillarin family. In terms of assembly, interacts with nop5. Component of box C/D small ribonucleoprotein (sRNP) particles that contain rpl7ae, FlpA and nop5, plus a guide RNA.

Involved in pre-rRNA and tRNA processing. Utilizes the methyl donor S-adenosyl-L-methionine to catalyze the site-specific 2'-hydroxyl methylation of ribose moieties in rRNA and tRNA. Site specificity is provided by a guide RNA that base pairs with the substrate. Methylation occurs at a characteristic distance from the sequence involved in base pairing with the guide RNA. This chain is Fibrillarin-like rRNA/tRNA 2'-O-methyltransferase, found in Halobacterium salinarum (strain ATCC 29341 / DSM 671 / R1).